The following is a 486-amino-acid chain: Serine/threonine-protein kinase 4 (486 aa).

Residues 29–280 (FDVLEKLGEG…AIQLLQHPFV (252 aa)) form the Protein kinase domain. Residues 35–43 (LGEGSYGSV) and Lys-58 each bind ATP. Asp-148 serves as the catalytic Proton acceptor. Position 182 is a phosphothreonine; by autocatalysis (Thr-182). Residues 288–324 (ILRDLINEAMDIKLKRQEAQQRELDQEDEENSEEDET) are a coiled coil. The interval 305–332 (EAQQRELDQEDEENSEEDETDSGTMVRA) is disordered. Residues 312–325 (DQEDEENSEEDETD) show a composition bias toward acidic residues. Residues 432-479 (YEFLKTWSVDELQRRLSALDPMMEQEIEEIRQKYQSKRQPILDAIEAK) enclose the SARAH domain.

Belongs to the protein kinase superfamily. STE Ser/Thr protein kinase family. STE20 subfamily. As to quaternary structure, homodimer; mediated via the coiled-coil region. It depends on Mg(2+) as a cofactor. In terms of processing, proteolytically cleaved by caspase-3 during apoptosis at Asp-325 resulting in a 37 kDa form. Proteolytic cleavage results in kinase activation and nuclear translocation of the truncated form (MST1/N).

Its subcellular location is the cytoplasm. The protein resides in the nucleus. The catalysed reaction is L-seryl-[protein] + ATP = O-phospho-L-seryl-[protein] + ADP + H(+). It carries out the reaction L-threonyl-[protein] + ATP = O-phospho-L-threonyl-[protein] + ADP + H(+). With respect to regulation, the C-terminal non-catalytic region inhibits the kinase activity, the enzyme is activated by caspase-cleavage. Homodimerization and autophosphorylation of Thr-182 is also required for full activation. In terms of biological role, stress-activated, pro-apoptotic kinase which, following caspase-cleavage, enters the nucleus and induces chromatin condensation followed by internucleosomal DNA fragmentation. Key component of the Hippo signaling pathway which plays a pivotal role in organ size control and tumor suppression by restricting proliferation and promoting apoptosis. The core of this pathway is composed of a kinase cascade wherein STK3/MST2 and STK4/MST1, in complex with its regulatory protein SAV1, phosphorylates and activates LATS1/2 in complex with its regulatory protein MOB1, which in turn phosphorylates and inactivates YAP1 oncoprotein and WWTR1/TAZ. Phosphorylation of YAP1 by LATS2 inhibits its translocation into the nucleus to regulate cellular genes important for cell proliferation, cell death, and cell migration. Phosphorylates 'Ser-14' of histone H2B (H2BS14ph) during apoptosis. Phosphorylates FOXO3 upon oxidative stress, which results in its nuclear translocation and cell death initiation. The chain is Serine/threonine-protein kinase 4 (STK4) from Gallus gallus (Chicken).